The following is a 602-amino-acid chain: Leucine-rich repeat-containing protein 40 (602 aa).

The interval 1 to 26 (MSRHMRAPRFDPRAGFHAEGKDRGPS) is disordered. A compositionally biased stretch (basic and acidic residues) spans 8–24 (PRFDPRAGFHAEGKDRG). The LRR 1 repeat unit spans residues 35 to 58 (ARSSGQLNLAGRNLGEVPQCVWRI). Phosphoserine is present on serine 71. 20 LRR repeats span residues 81 to 103 (QTDLTKLIISSNKLQSLSDDLRL), 104 to 126 (LPALTVLDIHDNQLTSLPSAIRE), 127 to 149 (LDNLQKLNVSHNKLKILPEEITS), 150 to 172 (LKNLRTLHLQHNELTCIPEGFEH), 174 to 195 (SCLEDLDLSSNRLATVPADFAL), 196 to 219 (LSSLLRLNLSSNQLKNLPAEISRM), 221 to 241 (RLKHLDCDANLLETVPPDVGS), 242 to 266 (MESLELLYLRRNKLRVLPEFPSCRQ), 268 to 287 (KELHLAENQIEKLGAEHLQH), 288 to 310 (LQAILVLDLRGNKLRSVPEEMAL), 311 to 334 (LQSLERLDLSNNDISSLPCSLGNL), 336 to 356 (LKFLALEGNPLRTIRREIIAK), 398 to 421 (IATLKLLDYSDKQATLIPDDLFDA), 424 to 447 (TTLITSINFSKNQLCEIPQRIVEL), 449 to 470 (EMVLDINLSFNKLSFISHELCL), 471 to 494 (LQKLTFLDLRNNFLSSLPEEMSSL), 496 to 517 (KLQTINLSFNRFKVFPEVLYRI), 519 to 540 (TLEAVLISNNQVGSVDPQKMKL), 541 to 564 (MENLNTLDLQNNDLLQIPPELGNC), and 566 to 587 (QLRTLLLDGNPFRVPRAAILMK).

In Mus musculus (Mouse), this protein is Leucine-rich repeat-containing protein 40 (Lrrc40).